Reading from the N-terminus, the 129-residue chain is Small ribosomal subunit protein uS9 (129 aa).

It belongs to the universal ribosomal protein uS9 family.

In Chlorobium phaeovibrioides (strain DSM 265 / 1930) (Prosthecochloris vibrioformis (strain DSM 265)), this protein is Small ribosomal subunit protein uS9.